Here is a 93-residue protein sequence, read N- to C-terminus: uncharacterized protein (93 aa).

The protein to E.coli YdbD C-terminal region.

This is an uncharacterized protein from Escherichia coli (strain K12).